The chain runs to 347 residues: Protein RecA (347 aa).

67-74 (GPESSGKT) is an ATP binding site.

This sequence belongs to the RecA family.

It localises to the cytoplasm. Can catalyze the hydrolysis of ATP in the presence of single-stranded DNA, the ATP-dependent uptake of single-stranded DNA by duplex DNA, and the ATP-dependent hybridization of homologous single-stranded DNAs. It interacts with LexA causing its activation and leading to its autocatalytic cleavage. The chain is Protein RecA from Helicobacter pylori (strain G27).